A 142-amino-acid chain; its full sequence is Large ribosomal subunit protein uL13 (142 aa).

It belongs to the universal ribosomal protein uL13 family. In terms of assembly, part of the 50S ribosomal subunit.

Its function is as follows. This protein is one of the early assembly proteins of the 50S ribosomal subunit, although it is not seen to bind rRNA by itself. It is important during the early stages of 50S assembly. The sequence is that of Large ribosomal subunit protein uL13 from Shewanella amazonensis (strain ATCC BAA-1098 / SB2B).